The sequence spans 111 residues: Large ribosomal subunit protein uL23 (111 aa).

It belongs to the universal ribosomal protein uL23 family. As to quaternary structure, part of the 50S ribosomal subunit. Contacts protein L29, and trigger factor when it is bound to the ribosome.

In terms of biological role, one of the early assembly proteins it binds 23S rRNA. One of the proteins that surrounds the polypeptide exit tunnel on the outside of the ribosome. Forms the main docking site for trigger factor binding to the ribosome. This chain is Large ribosomal subunit protein uL23, found in Chlamydia felis (strain Fe/C-56) (Chlamydophila felis).